The sequence spans 203 residues: MAKEIAKSLLDIEAVTLSPNDLYTWSSGIKSPIYCDNRVTLGYPLVRGAIRDGLINLIKEHFPEVEVISGTATAGIPHAAFIAEKLKLPMNYVRSSNKSHGKQNQIEGAKSEGKKVVVIEDLISTGGSSVTAVEALKQAGAEVLGVVAIFTYGLKKADDTFSNIQLPFYTLSDYNELIEVAENEGKISSEDIQTLVEWRDNLA.

5-phospho-alpha-D-ribose 1-diphosphate contacts are provided by residues R94, K98, H100, and 120 to 128; that span reads EDLISTGGS. An orotate-binding site is contributed by S124.

It belongs to the purine/pyrimidine phosphoribosyltransferase family. PyrE subfamily. In terms of assembly, homodimer. The cofactor is Mg(2+).

The enzyme catalyses orotidine 5'-phosphate + diphosphate = orotate + 5-phospho-alpha-D-ribose 1-diphosphate. It functions in the pathway pyrimidine metabolism; UMP biosynthesis via de novo pathway; UMP from orotate: step 1/2. Its function is as follows. Catalyzes the transfer of a ribosyl phosphate group from 5-phosphoribose 1-diphosphate to orotate, leading to the formation of orotidine monophosphate (OMP). This is Orotate phosphoribosyltransferase from Staphylococcus aureus (strain Mu50 / ATCC 700699).